The chain runs to 500 residues: Probable cytosol aminopeptidase (500 aa).

Mn(2+) contacts are provided by Lys-265 and Asp-270. Residue Lys-277 is part of the active site. Residues Asp-288, Asp-347, and Glu-349 each contribute to the Mn(2+) site. Residue Arg-351 is part of the active site.

It belongs to the peptidase M17 family. Mn(2+) is required as a cofactor.

It localises to the cytoplasm. It carries out the reaction Release of an N-terminal amino acid, Xaa-|-Yaa-, in which Xaa is preferably Leu, but may be other amino acids including Pro although not Arg or Lys, and Yaa may be Pro. Amino acid amides and methyl esters are also readily hydrolyzed, but rates on arylamides are exceedingly low.. The catalysed reaction is Release of an N-terminal amino acid, preferentially leucine, but not glutamic or aspartic acids.. In terms of biological role, presumably involved in the processing and regular turnover of intracellular proteins. Catalyzes the removal of unsubstituted N-terminal amino acids from various peptides. The sequence is that of Probable cytosol aminopeptidase from Rickettsia africae (strain ESF-5).